Consider the following 800-residue polypeptide: Ion-translocating oxidoreductase complex subunit C (800 aa).

4Fe-4S ferredoxin-type domains follow at residues 367 to 398 (DEFS…QQLY) and 408 to 437 (KARG…VQYY). Residues cysteine 378, cysteine 381, cysteine 384, cysteine 388, cysteine 417, cysteine 420, cysteine 423, and cysteine 427 each contribute to the [4Fe-4S] cluster site. Low complexity-rich tracts occupy residues 536–553 (GATP…APAP), 571–583 (AKQA…PAAT), 599–617 (AAIA…APAA), 647–667 (AKQA…ADPA), and 675–690 (AAIA…KQAA). 3 disordered regions span residues 536-558 (GATP…DDPR), 571-631 (AKQA…QDDP), and 647-706 (AKQA…ENTD). Residues 693–705 (HATTEPVTVQENT) are compositionally biased toward polar residues.

The protein belongs to the 4Fe4S bacterial-type ferredoxin family. RnfC subfamily. In terms of assembly, the complex is composed of six subunits: RnfA, RnfB, RnfC, RnfD, RnfE and RnfG. [4Fe-4S] cluster is required as a cofactor.

It localises to the cell inner membrane. Functionally, part of a membrane-bound complex that couples electron transfer with translocation of ions across the membrane. The protein is Ion-translocating oxidoreductase complex subunit C of Edwardsiella ictaluri (strain 93-146).